Consider the following 1092-residue polypeptide: Leukemia inhibitory factor receptor (1092 aa).

The first 43 residues, 1–43, serve as a signal peptide directing secretion; it reads MAAYSWWRQPSWMVDNKRSRMTPNLPWLLSALTLLHLTMHANG. The Extracellular segment spans residues 44–828; sequence LKRGVQDLKC…SMFVVTKENS (785 aa). The Fibronectin type-III 1 domain maps to 45–126; it reads KRGVQDLKCT…QSKFTLNEKD (82 aa). Cystine bridges form between Cys53–Cys63 and Cys80–Cys88. N-linked (GlcNAc...) asparagine glycosylation is found at Asn164, Asn199, Asn238, and Asn261. 2 disulfides stabilise this stretch: Cys208/Cys265 and Cys336/Cys346. 5 Fibronectin type-III domains span residues 330–429, 430–529, 533–624, 622–714, and 719–828; these read VPQK…VAPH, DPTS…TEAT, GPDT…IPND, PNDD…IGYV, and PIVA…KENS. N-linked (GlcNAc...) asparagine glycosylation is found at Asn385, Asn402, Asn421, Asn440, Asn453, and Asn476. An intrachain disulfide couples Cys461 to Cys506. Positions 514 to 518 match the WSXWS motif motif; the sequence is WSRWS. N-linked (GlcNAc...) asparagine glycans are attached at residues Asn567, Asn647, Asn658, Asn675, Asn724, and Asn782. Residues 829–853 traverse the membrane as a helical segment; the sequence is VGLIIAILIPVAVAVIVGVVTSILC. Residues 854–1092 lie on the Cytoplasmic side of the membrane; sequence YRKREWIKET…TNFFQNKPND (239 aa). Residues 864–872 carry the Box 1 motif motif; the sequence is FYPDIPNPE. 2 positions are modified to phosphoserine: Ser922 and Ser1039. Residues 1009–1092 form a disordered region; it reads EDTAAEDEEG…TNFFQNKPND (84 aa). Composition is skewed to polar residues over residues 1027-1062 and 1081-1092; these read ANVN…NSRQ and SFTNFFQNKPND.

It belongs to the type I cytokine receptor family. Type 2 subfamily. Heterodimer composed of LIFR and IL6ST. The heterodimer formed by LIFR and IL6ST interacts with the complex formed by CNTF and CNTFR. As to expression, placenta, liver, kidney, heart, lung, brain, and embryos. The liver may be the primary site of synthesis of the secreted form.

The protein resides in the cell membrane. The protein localises to the secreted. Signal-transducing molecule. May have a common pathway with IL6ST. The soluble form inhibits the biological activity of LIF by blocking its binding to receptors on target cells. The polypeptide is Leukemia inhibitory factor receptor (Lifr) (Mus musculus (Mouse)).